Reading from the N-terminus, the 274-residue chain is Large ribosomal subunit protein uL2 (274 aa).

The interval 214 to 274 is disordered; sequence LGRRPRTRPV…NKYIVERRKK (61 aa).

This sequence belongs to the universal ribosomal protein uL2 family. Part of the 50S ribosomal subunit. Forms a bridge to the 30S subunit in the 70S ribosome.

Its function is as follows. One of the primary rRNA binding proteins. Required for association of the 30S and 50S subunits to form the 70S ribosome, for tRNA binding and peptide bond formation. It has been suggested to have peptidyltransferase activity; this is somewhat controversial. Makes several contacts with the 16S rRNA in the 70S ribosome. In Flavobacterium johnsoniae (strain ATCC 17061 / DSM 2064 / JCM 8514 / BCRC 14874 / CCUG 350202 / NBRC 14942 / NCIMB 11054 / UW101) (Cytophaga johnsonae), this protein is Large ribosomal subunit protein uL2.